Here is a 128-residue protein sequence, read N- to C-terminus: Small ribosomal subunit protein uS11 (128 aa).

The protein belongs to the universal ribosomal protein uS11 family. In terms of assembly, part of the 30S ribosomal subunit. Interacts with proteins S7 and S18. Binds to IF-3.

In terms of biological role, located on the platform of the 30S subunit, it bridges several disparate RNA helices of the 16S rRNA. Forms part of the Shine-Dalgarno cleft in the 70S ribosome. The polypeptide is Small ribosomal subunit protein uS11 (Aster yellows witches'-broom phytoplasma (strain AYWB)).